We begin with the raw amino-acid sequence, 157 residues long: Myosin essential light chain, striated adductor muscle (157 aa).

EF-hand domains lie at 7 to 44 and 82 to 117; these read DEIDDLKDVFELFDFWDGRDGAVDAFKLGDVCRCLGIN and GTFADYMEAFKTFDREGQGFISGAELRHVLTALGER.

Its function is as follows. In molluscan muscle, calcium regulation is associated with myosin rather than with actin. Muscle myosin contains two types of light chains: the catalytic light chain, essential for ATPase activity, and the regulatory light chain, a calcium-binding protein responsible for Ca(2+) dependent binding and Ca(2+) dependent Mg-ATPase activity. The sequence is that of Myosin essential light chain, striated adductor muscle from Argopecten irradians (Bay scallop).